Here is a 125-residue protein sequence, read N- to C-terminus: Large ribosomal subunit protein bL12 (125 aa).

It belongs to the bacterial ribosomal protein bL12 family. In terms of assembly, homodimer. Part of the ribosomal stalk of the 50S ribosomal subunit. Forms a multimeric L10(L12)X complex, where L10 forms an elongated spine to which 2 to 4 L12 dimers bind in a sequential fashion. Binds GTP-bound translation factors.

Functionally, forms part of the ribosomal stalk which helps the ribosome interact with GTP-bound translation factors. Is thus essential for accurate translation. This Campylobacter lari (strain RM2100 / D67 / ATCC BAA-1060) protein is Large ribosomal subunit protein bL12.